Consider the following 530-residue polypeptide: MEDDSLYLGGEWQFNHFSKLTSSRPDAAFAEIQRTSLPEKSPLSCETRVDLCDDLAPVARQLAPREKLPLSSRRPAAVGAGLQNMGNTCYVNASLQCLTYTPPLANYMLSREHSQTCHRHKGCMLCTMQAHITRALHNPGHVIQPSQALAAGFHRGKQEDAHEFLMFTVDAMKKACLPGHKQVDHHSKDTTLIHQIFGGYWRSQIKCLHCHGISDTFDPYLDIALDIQAAQSVQQALEQLVKPEELNGENAYHCGVCLQRAPASKTLTLHTSAKVLILVLKRFSDVTGNKIAKNVQYPECLDMQPYMSQTNTGPLVYVLYAVLVHAGWSCHNGHYFSYVKAQEGQWYKMDDAEVTASSITSVLSQQAYVLFYIQKSEWERHSESVSRGREPRALGAEDTDRRAKQGELKRDHPCLQAPELDEHLVERATQESTLDHWKFLQEQNKTKPEFNVRKVEGTLPPDVLVIHQSKYKCGMKNHHPEQQSSLLNLSSTTPTHQESMNTGTLASLRGRARRSKGKNKHSKRALLVCQ.

The region spanning 80–375 (AGLQNMGNTC…QAYVLFYIQK (296 aa)) is the USP domain. Residue Cys-89 is the Nucleophile of the active site. The active-site Proton acceptor is His-334. Composition is skewed to basic and acidic residues over residues 382–392 (SESVSRGREPR) and 398–413 (DTDRRAKQGELKRDHP). Disordered regions lie at residues 382–414 (SESVSRGREPRALGAEDTDRRAKQGELKRDHPC) and 509–530 (RGRARRSKGKNKHSKRALLVCQ). Over residues 510–524 (GRARRSKGKNKHSKR) the composition is skewed to basic residues.

The protein belongs to the peptidase C19 family. USP17 subfamily.

The protein localises to the nucleus. It is found in the endoplasmic reticulum. The enzyme catalyses Thiol-dependent hydrolysis of ester, thioester, amide, peptide and isopeptide bonds formed by the C-terminal Gly of ubiquitin (a 76-residue protein attached to proteins as an intracellular targeting signal).. Functionally, deubiquitinating enzyme that removes conjugated ubiquitin from specific proteins to regulate different cellular processes that may include cell proliferation, progression through the cell cycle, apoptosis, cell migration, and the cellular response to viral infection. The protein is Ubiquitin carboxyl-terminal hydrolase 17-like protein 18 (USP17L18) of Homo sapiens (Human).